The sequence spans 692 residues: Highly divergent homeobox (692 aa).

Residues 3 to 63 (LRSVFTVEQQ…NKRRKMSSKS (61 aa)) constitute a DNA-binding region (homeobox 1). The span at 117–133 (SSSSKQGTTKHTNTQIT) shows a compositional bias: polar residues. The segment at 117 to 136 (SSSSKQGTTKHTNTQITEAH) is disordered. Glycyl lysine isopeptide (Lys-Gly) (interchain with G-Cter in SUMO2) cross-links involve residues lysine 137, lysine 142, lysine 146, lysine 165, lysine 174, lysine 196, lysine 214, lysine 223, and lysine 234. Positions 437 to 500 (ALQDRTQFSD…NRRRKYRLMG (64 aa)) form a DNA-binding region, homeobox 2. Disordered regions lie at residues 505 to 541 (PPRG…DNDR) and 647 to 692 (KDQQ…SDSL). Positions 676–692 (TSLSVSSLSEKNASDSL) are enriched in polar residues.

The protein resides in the nucleus. The polypeptide is Highly divergent homeobox (Hdx) (Mus musculus (Mouse)).